Consider the following 339-residue polypeptide: tRNA N6-adenosine threonylcarbamoyltransferase (339 aa).

Positions 112 and 116 each coordinate Fe cation. Residues Leu135–Gly139, Asp168, Gly181, and Asn273 contribute to the substrate site. Residue Asp301 participates in Fe cation binding.

Belongs to the KAE1 / TsaD family. It depends on Fe(2+) as a cofactor.

The protein localises to the cytoplasm. It catalyses the reaction L-threonylcarbamoyladenylate + adenosine(37) in tRNA = N(6)-L-threonylcarbamoyladenosine(37) in tRNA + AMP + H(+). Functionally, required for the formation of a threonylcarbamoyl group on adenosine at position 37 (t(6)A37) in tRNAs that read codons beginning with adenine. Is involved in the transfer of the threonylcarbamoyl moiety of threonylcarbamoyl-AMP (TC-AMP) to the N6 group of A37, together with TsaE and TsaB. TsaD likely plays a direct catalytic role in this reaction. In Coxiella burnetii (strain RSA 493 / Nine Mile phase I), this protein is tRNA N6-adenosine threonylcarbamoyltransferase.